We begin with the raw amino-acid sequence, 59 residues long: Large ribosomal subunit protein bL32 (59 aa).

Over residues Met1–Arg16 the composition is skewed to basic residues. The segment at Met1–Asp20 is disordered.

This sequence belongs to the bacterial ribosomal protein bL32 family.

This chain is Large ribosomal subunit protein bL32, found in Sphingopyxis alaskensis (strain DSM 13593 / LMG 18877 / RB2256) (Sphingomonas alaskensis).